A 173-amino-acid polypeptide reads, in one-letter code: Crossover junction endodeoxyribonuclease RuvC (173 aa).

Catalysis depends on residues Asp8, Glu67, and Asp139. Positions 8, 67, and 139 each coordinate Mg(2+).

It belongs to the RuvC family. In terms of assembly, homodimer which binds Holliday junction (HJ) DNA. The HJ becomes 2-fold symmetrical on binding to RuvC with unstacked arms; it has a different conformation from HJ DNA in complex with RuvA. In the full resolvosome a probable DNA-RuvA(4)-RuvB(12)-RuvC(2) complex forms which resolves the HJ. Mg(2+) is required as a cofactor.

The protein localises to the cytoplasm. The catalysed reaction is Endonucleolytic cleavage at a junction such as a reciprocal single-stranded crossover between two homologous DNA duplexes (Holliday junction).. In terms of biological role, the RuvA-RuvB-RuvC complex processes Holliday junction (HJ) DNA during genetic recombination and DNA repair. Endonuclease that resolves HJ intermediates. Cleaves cruciform DNA by making single-stranded nicks across the HJ at symmetrical positions within the homologous arms, yielding a 5'-phosphate and a 3'-hydroxyl group; requires a central core of homology in the junction. The consensus cleavage sequence is 5'-(A/T)TT(C/G)-3'. Cleavage occurs on the 3'-side of the TT dinucleotide at the point of strand exchange. HJ branch migration catalyzed by RuvA-RuvB allows RuvC to scan DNA until it finds its consensus sequence, where it cleaves and resolves the cruciform DNA. The sequence is that of Crossover junction endodeoxyribonuclease RuvC from Salmonella agona (strain SL483).